Reading from the N-terminus, the 479-residue chain is Siroheme synthase (479 aa).

The segment at 1-202 is precorrin-2 dehydrogenase /sirohydrochlorin ferrochelatase; it reads MNYLPIFLDL…GRDSEAEAQL (202 aa). NAD(+) contacts are provided by residues 22 to 23 and 43 to 44; these read ET and PA. Serine 128 carries the post-translational modification Phosphoserine. A uroporphyrinogen-III C-methyltransferase region spans residues 217–479; sequence GEVYLVGAGP…TPLEAPDHLA (263 aa). Proline 226 is a binding site for S-adenosyl-L-methionine. The Proton acceptor role is filled by aspartate 249. The active-site Proton donor is the lysine 271. S-adenosyl-L-methionine-binding positions include 302–304, isoleucine 307, 332–333, methionine 384, and glycine 413; these read GGD and TA.

This sequence in the N-terminal section; belongs to the precorrin-2 dehydrogenase / sirohydrochlorin ferrochelatase family. The protein in the C-terminal section; belongs to the precorrin methyltransferase family.

The catalysed reaction is uroporphyrinogen III + 2 S-adenosyl-L-methionine = precorrin-2 + 2 S-adenosyl-L-homocysteine + H(+). It catalyses the reaction precorrin-2 + NAD(+) = sirohydrochlorin + NADH + 2 H(+). The enzyme catalyses siroheme + 2 H(+) = sirohydrochlorin + Fe(2+). Its pathway is cofactor biosynthesis; adenosylcobalamin biosynthesis; precorrin-2 from uroporphyrinogen III: step 1/1. The protein operates within cofactor biosynthesis; adenosylcobalamin biosynthesis; sirohydrochlorin from precorrin-2: step 1/1. It participates in porphyrin-containing compound metabolism; siroheme biosynthesis; precorrin-2 from uroporphyrinogen III: step 1/1. It functions in the pathway porphyrin-containing compound metabolism; siroheme biosynthesis; siroheme from sirohydrochlorin: step 1/1. Its pathway is porphyrin-containing compound metabolism; siroheme biosynthesis; sirohydrochlorin from precorrin-2: step 1/1. Multifunctional enzyme that catalyzes the SAM-dependent methylations of uroporphyrinogen III at position C-2 and C-7 to form precorrin-2 via precorrin-1. Then it catalyzes the NAD-dependent ring dehydrogenation of precorrin-2 to yield sirohydrochlorin. Finally, it catalyzes the ferrochelation of sirohydrochlorin to yield siroheme. The sequence is that of Siroheme synthase from Thiobacillus denitrificans (strain ATCC 25259 / T1).